We begin with the raw amino-acid sequence, 362 residues long: Endolytic peptidoglycan transglycosylase RlpA (362 aa).

Residues 1-17 (MRKQWLGICIAAGMLAA) form the signal peptide. Cys18 carries N-palmitoyl cysteine lipidation. A lipid anchor (S-diacylglycerol cysteine) is attached at Cys18. Residues 198 to 276 (PDLSGGAGTS…PSTTPATSPA (79 aa)) are disordered. Over residues 262-276 (PVVTAPSTTPATSPA) the composition is skewed to low complexity. The SPOR domain maps to 285 to 361 (QSASGNFMVQ…AQLQSFITTA (77 aa)).

Belongs to the RlpA family.

It is found in the cell membrane. Its function is as follows. Lytic transglycosylase with a strong preference for naked glycan strands that lack stem peptides. The polypeptide is Endolytic peptidoglycan transglycosylase RlpA (Escherichia coli (strain K12)).